The sequence spans 184 residues: ATP synthase subunit delta (184 aa).

This sequence belongs to the ATPase delta chain family. F-type ATPases have 2 components, F(1) - the catalytic core - and F(0) - the membrane proton channel. F(1) has five subunits: alpha(3), beta(3), gamma(1), delta(1), epsilon(1). F(0) has three main subunits: a(1), b(2) and c(10-14). The alpha and beta chains form an alternating ring which encloses part of the gamma chain. F(1) is attached to F(0) by a central stalk formed by the gamma and epsilon chains, while a peripheral stalk is formed by the delta and b chains.

The protein localises to the cell membrane. Its function is as follows. F(1)F(0) ATP synthase produces ATP from ADP in the presence of a proton or sodium gradient. F-type ATPases consist of two structural domains, F(1) containing the extramembraneous catalytic core and F(0) containing the membrane proton channel, linked together by a central stalk and a peripheral stalk. During catalysis, ATP synthesis in the catalytic domain of F(1) is coupled via a rotary mechanism of the central stalk subunits to proton translocation. In terms of biological role, this protein is part of the stalk that links CF(0) to CF(1). It either transmits conformational changes from CF(0) to CF(1) or is implicated in proton conduction. The chain is ATP synthase subunit delta from Christiangramia forsetii (strain DSM 17595 / CGMCC 1.15422 / KT0803) (Gramella forsetii).